The primary structure comprises 122 residues: Small ribosomal subunit protein uS13 (122 aa).

Residues 99-122 are disordered; sequence RGQRTHTNARTRKGPAKAIAGKKK.

It belongs to the universal ribosomal protein uS13 family. In terms of assembly, part of the 30S ribosomal subunit. Forms a loose heterodimer with protein S19. Forms two bridges to the 50S subunit in the 70S ribosome.

Located at the top of the head of the 30S subunit, it contacts several helices of the 16S rRNA. In the 70S ribosome it contacts the 23S rRNA (bridge B1a) and protein L5 of the 50S subunit (bridge B1b), connecting the 2 subunits; these bridges are implicated in subunit movement. Contacts the tRNAs in the A and P-sites. The chain is Small ribosomal subunit protein uS13 from Rhodopseudomonas palustris (strain BisA53).